Reading from the N-terminus, the 251-residue chain is uncharacterized protein (251 aa).

10–34 (ITGAGSGIGKKAAVMFAERGAKVAI) is a binding site for NADP(+). S139 is a binding site for substrate. Y152 acts as the Proton acceptor in catalysis.

The protein belongs to the short-chain dehydrogenases/reductases (SDR) family.

This is an uncharacterized protein from Thermotoga maritima (strain ATCC 43589 / DSM 3109 / JCM 10099 / NBRC 100826 / MSB8).